Here is a 377-residue protein sequence, read N- to C-terminus: Alanine racemase (377 aa).

Catalysis depends on lysine 37, which acts as the Proton acceptor; specific for D-alanine. Lysine 37 carries the post-translational modification N6-(pyridoxal phosphate)lysine. Arginine 135 contributes to the substrate binding site. The Proton acceptor; specific for L-alanine role is filled by tyrosine 271. Methionine 319 is a binding site for substrate.

This sequence belongs to the alanine racemase family. Pyridoxal 5'-phosphate serves as cofactor.

The catalysed reaction is L-alanine = D-alanine. The protein operates within amino-acid biosynthesis; D-alanine biosynthesis; D-alanine from L-alanine: step 1/1. Functionally, catalyzes the interconversion of L-alanine and D-alanine. May also act on other amino acids. The chain is Alanine racemase (alr) from Helicobacter pylori (strain J99 / ATCC 700824) (Campylobacter pylori J99).